The following is a 678-amino-acid chain: Glycine--tRNA ligase beta subunit (678 aa).

The protein belongs to the class-II aminoacyl-tRNA synthetase family. Tetramer of two alpha and two beta subunits.

Its subcellular location is the cytoplasm. The catalysed reaction is tRNA(Gly) + glycine + ATP = glycyl-tRNA(Gly) + AMP + diphosphate. The chain is Glycine--tRNA ligase beta subunit from Streptococcus pneumoniae (strain Hungary19A-6).